A 681-amino-acid chain; its full sequence is MVSEKIKQEVEKLRKEIEYHNYRYYVLAQPVISDEEYDKLMKRLMELEEKYPELKTPDSPTQRVGGQLIEGFETVEHSEPMLSLDNTYNENEIRNFHERIRKVVRDVQYVAELKIDGVSIALRYENGLLVRAITRGDGLRGDDVTANVKTVKSIPLRLPEPLTIEVRGEIFMPVQYFEEFNRQREEEGLLPFANPRNATAGTLHLLDPSQVAQRKLDSFMYYIVKPQQYDLKTQWDALKFLEKLHFKVNPHSKLLSSIEEVIDYWKEWTEKRKKLEYWIDGVVVKVNDFEQQNELGWTAKSPRWAIAFKFPAQQVRTKVLNITFQVGRTGTITPVAEFEPVELEGSIVKRASLHNFDYIKENDIRVGDYVFIEKAGGIIPQISYVLKELRDGDEIETVPPEKCPECGGPVGKESGEYVAYKCLNPHCPAKLKRHIEVFVSRQAMDIQGLGPKIISKIVDAGLVKDIADLYYLNIFDLAQISGLGPKMISNILSEIEKSKQNPIEKLLVGLGIPGVGEKIAKVLAKKYKSMEELSKADIKELSEIEGIGEDIAKNIVEYFNSPKTKEILEKLRKAGVNLESAETTTSNILDGLTFCVTGTLENFSREEIKRFIESLGGHFTDNLTKKTDYLLVGTNPGSKLEKAKKFGVKVLNEQEFLEMLEKKGVELKESWKKPKPKDTLF.

Residues 34 to 38, 83 to 84, and Glu112 each bind NAD(+); these read DEEYD and SL. Catalysis depends on Lys114, which acts as the N6-AMP-lysine intermediate. NAD(+)-binding residues include Arg135, Glu169, Lys285, and Lys309. Residues Cys403, Cys406, Cys422, and Cys427 each contribute to the Zn(2+) site. Residues 584–673 enclose the BRCT domain; the sequence is TTSNILDGLT…GVELKESWKK (90 aa).

It belongs to the NAD-dependent DNA ligase family. LigA subfamily. The cofactor is Mg(2+). It depends on Mn(2+) as a cofactor.

It catalyses the reaction NAD(+) + (deoxyribonucleotide)n-3'-hydroxyl + 5'-phospho-(deoxyribonucleotide)m = (deoxyribonucleotide)n+m + AMP + beta-nicotinamide D-nucleotide.. Its function is as follows. DNA ligase that catalyzes the formation of phosphodiester linkages between 5'-phosphoryl and 3'-hydroxyl groups in double-stranded DNA using NAD as a coenzyme and as the energy source for the reaction. It is essential for DNA replication and repair of damaged DNA. This is DNA ligase from Fervidobacterium nodosum (strain ATCC 35602 / DSM 5306 / Rt17-B1).